A 453-amino-acid chain; its full sequence is Trigger factor (453 aa).

Residues 171 to 256 (GDRITISFKG…VSLIEAPEEL (86 aa)) form the PPIase FKBP-type domain.

This sequence belongs to the FKBP-type PPIase family. Tig subfamily.

Its subcellular location is the cytoplasm. It catalyses the reaction [protein]-peptidylproline (omega=180) = [protein]-peptidylproline (omega=0). Involved in protein export. Acts as a chaperone by maintaining the newly synthesized protein in an open conformation. Functions as a peptidyl-prolyl cis-trans isomerase. The chain is Trigger factor from Nitrobacter winogradskyi (strain ATCC 25391 / DSM 10237 / CIP 104748 / NCIMB 11846 / Nb-255).